The chain runs to 175 residues: Peptide deformylase (175 aa).

Cys99 and His141 together coordinate Fe cation. Glu142 is a catalytic residue. A Fe cation-binding site is contributed by His145.

This sequence belongs to the polypeptide deformylase family. Fe(2+) serves as cofactor.

It carries out the reaction N-terminal N-formyl-L-methionyl-[peptide] + H2O = N-terminal L-methionyl-[peptide] + formate. In terms of biological role, removes the formyl group from the N-terminal Met of newly synthesized proteins. Requires at least a dipeptide for an efficient rate of reaction. N-terminal L-methionine is a prerequisite for activity but the enzyme has broad specificity at other positions. In Rickettsia prowazekii (strain Madrid E), this protein is Peptide deformylase.